We begin with the raw amino-acid sequence, 366 residues long: Chorismate synthase (366 aa).

2 residues coordinate NADP(+): Arg-48 and Arg-54. FMN contacts are provided by residues 125–127 (RSS), 238–239 (NA), Gly-278, 293–297 (KPTSS), and Arg-319.

This sequence belongs to the chorismate synthase family. Homotetramer. It depends on FMNH2 as a cofactor.

The catalysed reaction is 5-O-(1-carboxyvinyl)-3-phosphoshikimate = chorismate + phosphate. The protein operates within metabolic intermediate biosynthesis; chorismate biosynthesis; chorismate from D-erythrose 4-phosphate and phosphoenolpyruvate: step 7/7. In terms of biological role, catalyzes the anti-1,4-elimination of the C-3 phosphate and the C-6 proR hydrogen from 5-enolpyruvylshikimate-3-phosphate (EPSP) to yield chorismate, which is the branch point compound that serves as the starting substrate for the three terminal pathways of aromatic amino acid biosynthesis. This reaction introduces a second double bond into the aromatic ring system. This is Chorismate synthase from Burkholderia cenocepacia (strain HI2424).